The primary structure comprises 419 residues: MAAVGVEARPPVTAMEETCNVKGAAAKQGEGLNKYYLQHLDELQRLQREKSYNLNRLEAQRNELNSRVRMLREELQLLQEPGSYVGEVVKVMGKNKVLVKVHPEGKYVVDIDKSIDITKLTPSTRVALRNDSYVLHLVLPSKVDPLVNLMKVEKVPDSTYDMIGGLDQQIKEIKEVIELPIKHPELFESLGIAQPKGVLLYGPPGTGKTLLARAVAHHTDCTFIRVSGSELVQKYIGEGSRMVRELFVMAREHAPSIIFMDEIDSIGSARMESGSGNGDSEVQRTMLELLNQLDGFEASNKIKVLMATNRIDILDQALLRPGRIDRKIEFPNPNEESRFDILKIHSRKMNLMRGIDLKKIAEKMNGASGAELKAVCTEAGMFALRERRVHVTQEDFEMAVAKVMKKDTEKNMSLRKLWK.

202 to 209 (GPPGTGKT) lines the ATP pocket. K406 participates in a covalent cross-link: Glycyl lysine isopeptide (Lys-Gly) (interchain with G-Cter in ubiquitin).

This sequence belongs to the AAA ATPase family. As to quaternary structure, component of the 19S regulatory particle (RP/PA700) base subcomplex of the 26S proteasome. The 26S proteasome is composed of a core protease (CP), known as the 20S proteasome, capped at one or both ends by the 19S regulatory particle (RP/PA700). The RP/PA700 complex is composed of at least 17 different subunits in two subcomplexes, the base and the lid, which form the portions proximal and distal to the 20S proteolytic core, respectively.

It localises to the cytoplasm. Its subcellular location is the nucleus. Functionally, the 26S proteasome is involved in the ATP-dependent degradation of ubiquitinated proteins. The regulatory (or ATPase) complex confers ATP dependency and substrate specificity to the 26S complex. In Arabidopsis thaliana (Mouse-ear cress), this protein is 26S proteasome regulatory subunit 8 homolog B (RPT6B).